The following is a 290-amino-acid chain: 4-hydroxy-tetrahydrodipicolinate synthase (290 aa).

Residue T44 coordinates pyruvate. The active-site Proton donor/acceptor is the Y132. K160 acts as the Schiff-base intermediate with substrate in catalysis. I202 lines the pyruvate pocket.

The protein belongs to the DapA family. Homotetramer; dimer of dimers.

It localises to the cytoplasm. The enzyme catalyses L-aspartate 4-semialdehyde + pyruvate = (2S,4S)-4-hydroxy-2,3,4,5-tetrahydrodipicolinate + H2O + H(+). It functions in the pathway amino-acid biosynthesis; L-lysine biosynthesis via DAP pathway; (S)-tetrahydrodipicolinate from L-aspartate: step 3/4. Catalyzes the condensation of (S)-aspartate-beta-semialdehyde [(S)-ASA] and pyruvate to 4-hydroxy-tetrahydrodipicolinate (HTPA). The sequence is that of 4-hydroxy-tetrahydrodipicolinate synthase from Geobacter sulfurreducens (strain ATCC 51573 / DSM 12127 / PCA).